Consider the following 1097-residue polypeptide: Protein toll (1097 aa).

An N-terminal signal peptide occupies residues 1–27; sequence MSRLKAASELALLVIILQLLQWPGSEA. Residues 28–807 are Extracellular-facing; sequence SFGRDACSEM…ICPAEKGVFI (780 aa). 3 disulfide bridges follow: C34-C45, C43-C56, and C79-C107. N-linked (GlcNAc...) asparagine glycosylation is found at N80, N140, and N175. 15 LRR repeats span residues 175-195, 198-219, 222-243, 246-267, 270-291, 294-314, 320-340, 343-364, 367-388, 391-412, 415-436, 439-460, 474-495, 498-521, and 523-544; these read NLSHLELRANIEEMPSHLFDD, NLESIEFGSNKLRQMPRGIFGK, KLKQLNLWSNQLHNLTKHDFEG, SVLGIDIHDNGIEQLPHDVFAH, NVTDINLSANLFRSLPQGLFDH, HLNEVRLMNNRVPLATLPSRL, ELQILRLRAELQSLPGDLFEH, QITNISLGDNLLKTLPATLLEH, NLLSLDLSNNRLTHLPDSLFAH, NLTDLRLEDNLLTGISGDIFSN, NLVTLVMSRNRLRTIDSRAFVS, GLRHLHLDHNDIDLQQPLLDIM, GLLTLNLRNNSIIFVYNDWKNT, QLRELDLSYNNISSLGYEDLAFLS, and NRLHVNMTHNKIRRIALPEDVH. N235 is a glycosylation site (N-linked (GlcNAc...) asparagine). N-linked (GlcNAc...) asparagine glycans are attached at residues N270 and N275. N346 is a glycosylation site (N-linked (GlcNAc...) asparagine). Residue N391 is glycosylated (N-linked (GlcNAc...) asparagine). N482, N508, and N528 each carry an N-linked (GlcNAc...) asparagine glycan. The region spanning 561-620 is the LRRCT 1 domain; it reads NPLVCDCTILWFIQLVRGVHKPQYSRQFKLRTDRLVCSQPNVLEGTPVRQIEPQTLICPL. 4 disulfides stabilise this stretch: C565/C597, C567/C618, C631/C637, and C635/C650. Residues 622-663 form the LRRNT domain; the sequence is FSDDPRERKCPRGCNCHVRTYDKALVINCHSGNLTHVPRLPN. Residues N654, N677, N703, N715, N730, and N738 are each glycosylated (N-linked (GlcNAc...) asparagine). LRR repeat units follow at residues 669 to 690, 693 to 713, and 715 to 738; these read QLMELHLENNTLLRLPSANTPG, SVTSLHLAGNNLTSIDVDQLP, and NLTHLDISWNHLQMLNATVLGFLN. The region spanning 751-801 is the LRRCT 2 domain; the sequence is NPWMCDCTAKPLLLFTQDNFERIGDRNEMMCVNAEMPTRMVELSTNDICPA. 2 disulfides stabilise this stretch: C755-C781 and C757-C799. Residues 808-828 traverse the membrane as a helical segment; it reads ALAVVIALTGLLAGFTAALYY. The Cytoplasmic segment spans residues 829–1097; sequence KFQTEIKIWL…INTNAKQSDV (269 aa). The region spanning 857–993 is the TIR domain; the sequence is KKFDAFISYS…WFWDKLRFAL (137 aa).

Belongs to the Toll-like receptor family. As to quaternary structure, in the absence of ligand, forms a low-affinity disulfide-linked homodimer. In the presence of ligand, crystal structures show one Tl molecule bound to a spaetzle C-106 homodimer. However, the active complex probably consists of two Tl molecules bound to a spaetzle C-106 homodimer. This is supported by in vitro experiments which also show binding of the spaetzle C-106 dimer to 2 Tl receptors. Ligand binding induces conformational changes in the extracellular domain of Tl. This may enable a secondary homodimerization interface at the C-terminus of the Tl extracellular domain. In early embryos, concentrated in the pseudocleavage furrows that form transiently between nuclei before cellularization and in the cleavage furrows during cellularization (at protein level). Later, found on cells in the mesectoderm, stomodeum, proctodeum, anterior and posterior midguts, splanchnopleura, salivary gland placode and adjacent to the segmentally repeated tracheal placodes (at protein level). During and after germ band shortening, localized in a number of cell types, including the salivary gland, foregut, hindgut, Malpighian tubules and epidermis (at protein level). In embryos, high expression in M13 with comparatively low expression in M12.

Its subcellular location is the cell membrane. It localises to the cytoplasm. Its function is as follows. Receptor for the cleaved activated form of spz, spaetzle C-106. Binding to spaetzle C-106 activates the Toll signaling pathway and induces expression of the antifungal peptide drosomycin. Component of the extracellular signaling pathway that establishes dorsal-ventral polarity in the embryo. Promotes heterophilic cellular adhesion. Involved in synaptic targeting of motoneurons RP5 and V to muscle 12 (M12); functions as a repulsive cue inhibiting motoneuron synapse formation on muscle 13 (M13) to guide RP5 and V to the neighboring M12, where its expression is repressed by tey. May also function in embryonic neuronal survival and the synaptic targeting of SNa motoneurons. The chain is Protein toll from Drosophila melanogaster (Fruit fly).